The chain runs to 668 residues: MKGRLLQRLRQLSISNSLRGAFLTGALLTLIVSMVSLYSWHEQSSQVRYSLDEYFPRIHSAFLIEGNLNLAVDQLNEFLLAPNTTVRLQLRTQIIQHLDKIERLSQGLQLAERRQLAVILQDSRTLLAELDNALYNMFLVREKVSELSARIDWLHDDFTTELNSLVQDFTWQQGTLLDQIEANQGDAAQYLQRSREVQNEQQQVYTLARIENQIVDDLRDRLNELKSGNNDGMLVETHIRYLENLKKTADENIRALDDWPSTITLRQTIDELLEIGMVKNKMPDTMRDYVAAQKALLDASRAREATLGRFRTLLEAQLGSSHQQMQTFNQRLEQIVRVSGGLILVATLLALLLAWGLNHYFIRSRLVKRFTALNQAVVQIGLGRTDSTIPVYGRDELGRIARLLRHTLGQLNMQRRQLEQEVAERKEIEADLRAMQDELIQTAKLAVVGQTMTTLAHEINQPLNALSMYLFTAGRAIEQGQSGQARNTLTKAEGLINRIDAIIRSLRQFTRRAELETPLYPVDLRQTFVAAWELLAMRHQSRQGALSLPTDTVWVSGDEVRIQQVLVNVLANALDACSHDAVIAVTWQTQGEALEVYIADNGPGWPVALLPSLLKPFTTSKAVGLGIGLSISVSLMAQMKGDLRLASTLTRNACVVLQFSVTDVDDVE.

The next 2 membrane-spanning stretches (helical) occupy residues 20-40 (GAFL…LYSW) and 342-362 (LILV…HYFI). Residues 364–416 (SRLVKRFTALNQAVVQIGLGRTDSTIPVYGRDELGRIARLLRHTLGQLNMQRR) enclose the HAMP domain. One can recognise a Histidine kinase domain in the interval 454–663 (TLAHEINQPL…CVVLQFSVTD (210 aa)). A Phosphohistidine; by autocatalysis modification is found at His-457.

It is found in the cell inner membrane. The catalysed reaction is ATP + protein L-histidine = ADP + protein N-phospho-L-histidine.. Member of the two-component regulatory system PgtB/PgtA that regulates the inducible phosphoglycerate transport system. Activates PgtA by phosphorylation. This chain is Phosphoglycerate transport system sensor protein PgtB (pgtB), found in Salmonella typhimurium (strain LT2 / SGSC1412 / ATCC 700720).